Reading from the N-terminus, the 81-residue chain is Mipartoxin-1 (81 aa).

The N-terminal stretch at 1 to 21 (MKTLLLTLVVVTIVCLDLGNS) is a signal peptide. Cystine bridges form between C24–C42, C35–C61, C65–C73, and C74–C79.

Belongs to the three-finger toxin family. Short-chain subfamily. In terms of processing, contains 4 disulfide bonds. As to expression, expressed by the venom gland.

The protein localises to the secreted. Functionally, snake venom neurotoxin that blocks neuromuscular transmission on both avian and mouse nerve-muscle preparations, presenting a postsynaptic action through the nicotinic acetylcholine receptor (nAChR). Reversibly inhibits twitches in mouse phrenic nerve diaphragm and irreversibly in chick biventer cervicis muscle. Has no cytotoxic activity towards C2C12 cells up to 180 ug/ml. This chain is Mipartoxin-1, found in Micrurus mipartitus (Red-tailed coral snake).